A 217-amino-acid polypeptide reads, in one-letter code: Octanoyltransferase (217 aa).

The 176-residue stretch at Lys31 to Glu206 folds into the BPL/LPL catalytic domain. Residues Arg70–His77, Ser137–Gly139, and Gly150–Ala152 contribute to the substrate site. Cys168 acts as the Acyl-thioester intermediate in catalysis.

This sequence belongs to the LipB family.

It localises to the cytoplasm. It catalyses the reaction octanoyl-[ACP] + L-lysyl-[protein] = N(6)-octanoyl-L-lysyl-[protein] + holo-[ACP] + H(+). It participates in protein modification; protein lipoylation via endogenous pathway; protein N(6)-(lipoyl)lysine from octanoyl-[acyl-carrier-protein]: step 1/2. In terms of biological role, catalyzes the transfer of endogenously produced octanoic acid from octanoyl-acyl-carrier-protein onto the lipoyl domains of lipoate-dependent enzymes. Lipoyl-ACP can also act as a substrate although octanoyl-ACP is likely to be the physiological substrate. This is Octanoyltransferase from Pseudomonas aeruginosa (strain UCBPP-PA14).